The following is a 347-amino-acid chain: NADH-ubiquinone oxidoreductase chain 2 (347 aa).

Transmembrane regions (helical) follow at residues 3–23 (PIIL…VMIS), 25–45 (HWLL…PIMM), 67–87 (SMLL…WTVM), 96–116 (MLMT…FWVP), 122–142 (IPLS…MSVL), 145–165 (ILPS…ITIG), 178–198 (IMAY…LYNP), 200–220 (MTLL…TLFM), 237–257 (APIM…LPPL), 274–294 (DSII…YFYM), and 325–345 (LLPT…ILSI).

The protein belongs to the complex I subunit 2 family. Core subunit of respiratory chain NADH dehydrogenase (Complex I) which is composed of 45 different subunits. Interacts with TMEM242.

It localises to the mitochondrion inner membrane. The enzyme catalyses a ubiquinone + NADH + 5 H(+)(in) = a ubiquinol + NAD(+) + 4 H(+)(out). Core subunit of the mitochondrial membrane respiratory chain NADH dehydrogenase (Complex I) which catalyzes electron transfer from NADH through the respiratory chain, using ubiquinone as an electron acceptor. Essential for the catalytic activity and assembly of complex I. The polypeptide is NADH-ubiquinone oxidoreductase chain 2 (Ovis aries (Sheep)).